Reading from the N-terminus, the 52-residue chain is SDFRNAAVHERQKELVVTATTTCCGYNPMTSCPRCMCDSSCNKKKKPGRRND.

A propeptide spanning residues 1–11 (SDFRNAAVHER) is cleaved from the precursor. Residue Gln12 is modified to Pyrrolidone carboxylic acid. Glu14 is modified (4-carboxyglutamate). O-linked (HexNAc...) threonine glycosylation is found at Thr18 and Thr20. A 4-hydroxyproline mark is found at Pro28, Pro33, and Pro47. Pro47 carries the proline amide modification. A propeptide spanning residues 48–52 (GRRND) is cleaved from the precursor.

The protein belongs to the conotoxin A superfamily. Post-translationally, contains 3 disulfide bonds. In terms of tissue distribution, expressed by the venom duct.

The protein resides in the secreted. Functionally, probable neurotoxin with ion channel inhibitor activity. The protein is Conotoxin Ac4.3a of Conus achatinus (Little frog cone).